Reading from the N-terminus, the 67-residue chain is Large ribosomal subunit protein uL29 (67 aa).

Belongs to the universal ribosomal protein uL29 family.

This Heliobacterium modesticaldum (strain ATCC 51547 / Ice1) protein is Large ribosomal subunit protein uL29.